The following is a 515-amino-acid chain: MPVIDVAKSDLERLTGLKYEEIAKLFEYIKGEIESDSGERLRIEVTHDRPDHFSAEGLAKTLKGIAEIEVGLPRISLGRSSIRLVAESITERPYIAMAVVRNVRLDEEAIKQMIQLQEKLHETYGRGRRKIAIGFYDVSKIKPPIYYRRISQEDEYIPLGFQKPVKVREMYELTEQGRRYSGLINRENPPALVDASGQIMVVIPVLGSECCKITEATRDVLIDVTGTDHRAVANALSILIYSLLERSGSKEVEIVEGGTGYSHEYVKIYVDERAVSEFLGVKIAHEDFIKYIKKARFDYQEGAVIIPPYRINVLSWVDVAEDVAIVMGYNQMPREVPEIPSAGRRHRTEVITLEVRKSMLSMGFTELNNYVLTDEAVAEVCSPARVANPISELYTTIRCSIITQLISAASALKRRETKIFEVGEVVREGRTVRALAFLISRDGATLTDGLSVVKSLCKRLGLKCEFFPAEAKWALPNRMAEVRGEITGYIAEVNPDVLTALKHAVPTVVAELYIG.

The 72-residue stretch at 263–334 folds into the B5 domain; sequence HEYVKIYVDE…IVMGYNQMPR (72 aa). The Mg(2+) site is built by N312, D318, E321, and D322.

This sequence belongs to the phenylalanyl-tRNA synthetase beta subunit family. Type 2 subfamily. In terms of assembly, tetramer of two alpha and two beta subunits. The cofactor is Mg(2+).

The protein localises to the cytoplasm. It carries out the reaction tRNA(Phe) + L-phenylalanine + ATP = L-phenylalanyl-tRNA(Phe) + AMP + diphosphate + H(+). The polypeptide is Phenylalanine--tRNA ligase beta subunit (Pyrobaculum aerophilum (strain ATCC 51768 / DSM 7523 / JCM 9630 / CIP 104966 / NBRC 100827 / IM2)).